The primary structure comprises 242 residues: Mediator of RNA polymerase II transcription subunit 19-A (242 aa).

Polar residues predominate over residues 1–15 (MTEIFSTLFGQNDAQ). 2 disordered regions span residues 1-33 (MTEI…PPPS) and 171-242 (PPKK…NSLR). Residues 171 to 184 (PPKKKSKHKHRHHH) show a composition bias toward basic residues. A compositionally biased stretch (basic and acidic residues) spans 193–210 (TRTDPTKKKKKKDNEPER). A compositionally biased stretch (basic residues) spans 211–223 (RKKKKDKKKKKNR). Residues 232–242 (TGSQPNSNSLR) are compositionally biased toward polar residues.

The protein belongs to the Mediator complex subunit 19 family. Component of the Mediator complex.

It localises to the nucleus. Its function is as follows. Component of the Mediator complex, a coactivator involved in the regulated transcription of nearly all RNA polymerase II-dependent genes. Mediator functions as a bridge to convey information from gene-specific regulatory proteins to the basal RNA polymerase II transcription machinery. Mediator is recruited to promoters by direct interactions with regulatory proteins and serves as a scaffold for the assembly of a functional preinitiation complex with RNA polymerase II and the general transcription factors. This chain is Mediator of RNA polymerase II transcription subunit 19-A (med19a), found in Danio rerio (Zebrafish).